A 96-amino-acid chain; its full sequence is Co-chaperonin GroES (96 aa).

Belongs to the GroES chaperonin family. In terms of assembly, heptamer of 7 subunits arranged in a ring. Interacts with the chaperonin GroEL.

It is found in the cytoplasm. Functionally, together with the chaperonin GroEL, plays an essential role in assisting protein folding. The GroEL-GroES system forms a nano-cage that allows encapsulation of the non-native substrate proteins and provides a physical environment optimized to promote and accelerate protein folding. GroES binds to the apical surface of the GroEL ring, thereby capping the opening of the GroEL channel. This Dechloromonas aromatica (strain RCB) protein is Co-chaperonin GroES.